Here is a 120-residue protein sequence, read N- to C-terminus: NAD(P)H-quinone oxidoreductase subunit 3, chloroplastic (120 aa).

Transmembrane regions (helical) follow at residues 9 to 29 (IFWA…TISG), 64 to 84 (MFAL…PWAM), and 88 to 108 (VLGI…IVGS).

The protein belongs to the complex I subunit 3 family. NDH is composed of at least 16 different subunits, 5 of which are encoded in the nucleus.

It localises to the plastid. Its subcellular location is the chloroplast thylakoid membrane. The enzyme catalyses a plastoquinone + NADH + (n+1) H(+)(in) = a plastoquinol + NAD(+) + n H(+)(out). It carries out the reaction a plastoquinone + NADPH + (n+1) H(+)(in) = a plastoquinol + NADP(+) + n H(+)(out). NDH shuttles electrons from NAD(P)H:plastoquinone, via FMN and iron-sulfur (Fe-S) centers, to quinones in the photosynthetic chain and possibly in a chloroplast respiratory chain. The immediate electron acceptor for the enzyme in this species is believed to be plastoquinone. Couples the redox reaction to proton translocation, and thus conserves the redox energy in a proton gradient. This is NAD(P)H-quinone oxidoreductase subunit 3, chloroplastic from Lotus japonicus (Lotus corniculatus var. japonicus).